A 474-amino-acid chain; its full sequence is uncharacterized protein (474 aa).

Residues Gly374–Leu398 form a helical membrane-spanning segment.

It is found in the membrane. This is an uncharacterized protein from Borreliella burgdorferi (strain ATCC 35210 / DSM 4680 / CIP 102532 / B31) (Borrelia burgdorferi).